We begin with the raw amino-acid sequence, 117 residues long: Ig heavy chain V region MOO (117 aa).

The 116-residue stretch at 1–116 (EVKLVESGGD…FGQGTIVTVS (116 aa)) folds into the Ig-like domain.

In Canis lupus familiaris (Dog), this protein is Ig heavy chain V region MOO.